We begin with the raw amino-acid sequence, 205 residues long: Holliday junction branch migration complex subunit RuvA (205 aa).

The interval 1-64 is domain I; sequence MIGRLKGILI…ENLHQLFGFA (64 aa). The interval 65 to 143 is domain II; the sequence is EQRDRSLFRT…NWDLPQGDML (79 aa). Positions 144-153 are flexible linker; it reads AHGEIQAIAS. The interval 153 to 205 is domain III; sequence SDNDIYAEAESALIALGYKPVDAAKMVASAAKQKPEARSEELIRIALRSLAGV.

Belongs to the RuvA family. Homotetramer. Forms an RuvA(8)-RuvB(12)-Holliday junction (HJ) complex. HJ DNA is sandwiched between 2 RuvA tetramers; dsDNA enters through RuvA and exits via RuvB. An RuvB hexamer assembles on each DNA strand where it exits the tetramer. Each RuvB hexamer is contacted by two RuvA subunits (via domain III) on 2 adjacent RuvB subunits; this complex drives branch migration. In the full resolvosome a probable DNA-RuvA(4)-RuvB(12)-RuvC(2) complex forms which resolves the HJ.

It is found in the cytoplasm. Functionally, the RuvA-RuvB-RuvC complex processes Holliday junction (HJ) DNA during genetic recombination and DNA repair, while the RuvA-RuvB complex plays an important role in the rescue of blocked DNA replication forks via replication fork reversal (RFR). RuvA specifically binds to HJ cruciform DNA, conferring on it an open structure. The RuvB hexamer acts as an ATP-dependent pump, pulling dsDNA into and through the RuvAB complex. HJ branch migration allows RuvC to scan DNA until it finds its consensus sequence, where it cleaves and resolves the cruciform DNA. This Cellvibrio japonicus (strain Ueda107) (Pseudomonas fluorescens subsp. cellulosa) protein is Holliday junction branch migration complex subunit RuvA.